A 431-amino-acid chain; its full sequence is MLDIQLLRSNTAAVAERLARRGYDFDTARFDTLEERRKSVQVKTEELQASRNSISKQIGALKGQGKHEEAQAAMNQVAQIKTDLEQAAADLDAVQKELDAWLLSIPNLPHESVPAGKDETENVEVRKVGTPREFDFEIKDHVDLGEPLGLDFEGGAKLSGARFTVMRGQIARLHRALAQFMLDTHTLQHGYTEHYTPYIVDDTTLQGTGQLPKFAEDLFHVTRGGDETKTTQYLIPTAEVTLTNTVADSIIPSEQLPLKLTAHSPCFRSEAGSYGKDTRGLIRQHQFDKVEMVQIVHPEKSYETLEEMVGHAENILKALELPYRVITLCTGDMGFGAAKTYDLEVWVPAQNTYREISSCSNCEDFQARRLKARFKDENGKNRLVHTLNGSGLAVGRTLVAVLENHQNADGSINIPAALQPYMGGVAKLEVK.

Position 237 to 239 (237 to 239) interacts with L-serine; that stretch reads TAE. 268-270 is an ATP binding site; the sequence is RSE. Glu-291 contacts L-serine. 355 to 358 contacts ATP; it reads EISS. Residue Ser-390 coordinates L-serine.

This sequence belongs to the class-II aminoacyl-tRNA synthetase family. Type-1 seryl-tRNA synthetase subfamily. As to quaternary structure, homodimer. The tRNA molecule binds across the dimer.

The protein resides in the cytoplasm. The catalysed reaction is tRNA(Ser) + L-serine + ATP = L-seryl-tRNA(Ser) + AMP + diphosphate + H(+). The enzyme catalyses tRNA(Sec) + L-serine + ATP = L-seryl-tRNA(Sec) + AMP + diphosphate + H(+). Its pathway is aminoacyl-tRNA biosynthesis; selenocysteinyl-tRNA(Sec) biosynthesis; L-seryl-tRNA(Sec) from L-serine and tRNA(Sec): step 1/1. Functionally, catalyzes the attachment of serine to tRNA(Ser). Is also able to aminoacylate tRNA(Sec) with serine, to form the misacylated tRNA L-seryl-tRNA(Sec), which will be further converted into selenocysteinyl-tRNA(Sec). The chain is Serine--tRNA ligase from Neisseria meningitidis serogroup B (strain ATCC BAA-335 / MC58).